Reading from the N-terminus, the 117-residue chain is Acrylate reductase cytochrome subunit (117 aa).

The first 22 residues, 1–22 (MKMYKLMLGLVLAGLVSLSAQA), serve as a signal peptide directing secretion. Heme c-binding residues include H29, C37, C40, H41, C54, C57, H58, H79, H83, C90, C93, H94, H97, C104, C107, and H108.

As to quaternary structure, the ArdAB flavocytochrome c is composed of a FAD-containing subunit (ArdA) and a heme c-containing subunit (ArdB). Heme c is required as a cofactor.

It localises to the periplasm. Methacrylate acts as a competitive inhibitor of the acrylate reductase activity and suppresses the reductase activity in dose-dependent manner. Functionally, heme c-containing subunit of the ArdAB flavocytochrome c, which catalyzes the reduction of acrylate to propanoate and supports dimethylsulfoniopropionate-dependent anaerobic respiration. In vitro, can use the artificial electron donor methyl viologen. The natural electron donor is probably a low-potential cytochrome c. Also shows weak activity toward methacrylate in vitro (at a 22-fold lower rate) but cannot use other tested 2-enoates, including crotonic, fumaric, sorbic, urocanic, cinnamic, p-coumaric, caffeic or ferulic acids. The protein catalyzes a unidirectional reaction and cannot oxidize propanoate with phenazine metasulfate and dichlorophenolindophenol as electron acceptors. The polypeptide is Acrylate reductase cytochrome subunit (Shewanella woodyi (strain ATCC 51908 / MS32)).